The primary structure comprises 358 residues: Leukotriene B4 receptor 2 (358 aa).

Residues 1 to 24 (MSVCYRPPGNETLLSWKGSRATGT) are Extracellular-facing. Asn10 carries an N-linked (GlcNAc...) asparagine glycan. The chain crosses the membrane as a helical span at residues 25–45 (AFLLLAALLGLPGNGFVVWSL). Topologically, residues 46-60 (AGWRPTAGRPLAATL) are cytoplasmic. The chain crosses the membrane as a helical span at residues 61 to 81 (VLHLALADGAVLLLTPLFVAF). The Extracellular portion of the chain corresponds to 82–96 (LSRQAWPLGQVGCKA). The helical transmembrane segment at 97–117 (VYYVCALSMYASVLLTGLLSL) threads the bilayer. Over 118-140 (QRCLAVTRPFLAPRLRSPALARR) the chain is Cytoplasmic. The chain crosses the membrane as a helical span at residues 141 to 161 (LLLGVWLAALVLAVPAAVYRH). Over 162–185 (LWGDRVCQLCHPSAVHAAAHLSLE) the chain is Extracellular. A helical transmembrane segment spans residues 186–206 (TLTAFVLPFGTVLGCYGVTLA). Over 207–225 (RLRGARWGSGRQGTRVGRL) the chain is Cytoplasmic. The helical transmembrane segment at 226 to 246 (VSAIVLAFGLLWAPYHAVNLL) threads the bilayer. Residues 247-275 (QAVAALAPPEGPLARLGGAGQAARAGTTA) lie on the Extracellular side of the membrane. A helical transmembrane segment spans residues 276–296 (LAFFSSSVNPVLYVFTAGDLL). Residues 297-358 (PRAGPRFLTR…GRMEKDSQEW (62 aa)) lie on the Cytoplasmic side of the membrane. The interval 315–358 (RVGSRSREGTMELRTTPRLKVVGQGRGYGDPGGGGRMEKDSQEW) is disordered. The span at 338 to 349 (QGRGYGDPGGGG) shows a compositional bias: gly residues.

The protein belongs to the G-protein coupled receptor 1 family.

It is found in the cell membrane. In terms of biological role, low-affinity receptor for leukotrienes including leukotriene B4. Mediates chemotaxis of granulocytes and macrophages. The response is mediated via G-proteins that activate a phosphatidylinositol-calcium second messenger system. In Rattus norvegicus (Rat), this protein is Leukotriene B4 receptor 2 (Ltb4r2).